The primary structure comprises 558 residues: Asparagine--tRNA ligase, cytoplasmic (558 aa).

Ser71 carries the phosphoserine modification. Residues 79-101 are disordered; it reads MWHREQMKSESREKKEAEDSLRR. A compositionally biased stretch (basic and acidic residues) spans 81 to 101; that stretch reads HREQMKSESREKKEAEDSLRR. Lys254 and Lys500 each carry N6-acetyllysine.

The protein belongs to the class-II aminoacyl-tRNA synthetase family. Homodimer.

The protein resides in the cytoplasm. The enzyme catalyses tRNA(Asn) + L-asparagine + ATP = L-asparaginyl-tRNA(Asn) + AMP + diphosphate + H(+). Functionally, catalyzes the attachment of asparagine to tRNA(Asn) in a two-step reaction: asparagine is first activated by ATP to form Asn-AMP and then transferred to the acceptor end of tRNA(Asn). In addition to its essential role in protein synthesis, acts as a signaling molecule that induced migration of CCR3-expressing cells. Has an essential role in the development of the cerebral cortex, being required for proper proliferation of radial glial cells. This chain is Asparagine--tRNA ligase, cytoplasmic, found in Macaca fascicularis (Crab-eating macaque).